A 546-amino-acid polypeptide reads, in one-letter code: Serine/threonine-protein kinase Chk2 (546 aa).

The interval 1-70 (MKSHHQSHSS…SSHSSSGTLS (70 aa)) is disordered. Over residues 8-70 (HSSTSSKAHD…SSHSSSGTLS (63 aa)) the composition is skewed to low complexity. Threonine 68 bears the Phosphothreonine; by MAP3K20 mark. Serine 71 is modified (phosphoserine; by PLK3). Position 77 is a phosphothreonine; by ATM and MAP3K20 (threonine 77). A Phosphoserine; by PLK3 modification is found at serine 82. The region spanning 117–179 (YWFGRDKSCE…NGTFVNTELI (63 aa)) is the FHA domain. The Protein kinase domain occupies 224–490 (YIMSKTLGSG…TEEALNHPWL (267 aa)). ATP is bound by residues 231–238 (GSGACGEV), lysine 253, and 306–312 (ELMEGGE). The active-site Proton acceptor is the aspartate 351. ATP contacts are provided by residues 355 to 356 (EN) and aspartate 372. Residues 372-398 (DFGQSKILGETSLMRTLCGTPTYLAPE) are T-loop/activation segment. Phosphoserine; by autocatalysis is present on serine 383. A phosphothreonine; by autocatalysis mark is found at threonine 387 and threonine 391. Serine 460 is modified (phosphoserine).

The protein belongs to the protein kinase superfamily. CAMK Ser/Thr protein kinase family. CHK2 subfamily. In terms of assembly, homodimer. Homodimerization is part of the activation process but the dimer may dissociate following activation. Interacts with PML. Interacts with TP53. Interacts with RB1; phosphorylates RB1. Interacts with BRCA1. Interacts (phosphorylated at Thr-68) with MDC1; requires ATM-mediated phosphorylation of CHEK2. Interacts with TP53BP1; modulates CHEK2 phosphorylation at Thr-68 in response to ionizing radiation. Interacts with CDC25A; phosphorylates CDC25A and mediates its degradation in response to ionizing radiation. Interacts with CUL1; mediates CHEK2 ubiquitination and regulation. Interacts with CDKN2AIP. Interacts (via protein kinase domain) with CCAR2 (via N-terminus). Interacts with SIRT1. Mg(2+) serves as cofactor. Post-translationally, phosphorylated. Phosphorylated at Ser-82 by PLK3 in response to DNA damage, promoting phosphorylation at Thr-77 by ATM and the G2/M transition checkpoint. Phosphorylation at Thr-77 induces homodimerization. Autophosphorylates at Thr-387 and Thr-391 in the T-loop/activation segment upon dimerization to become fully active. DNA damage-induced autophosphorylation at Ser-383 induces CUL1-mediated ubiquitination and regulates the pro-apoptotic function. Phosphorylation at Ser-460 also regulates ubiquitination. Phosphorylated by PLK4. Ubiquitinated. CUL1-mediated ubiquitination regulates the pro-apoptotic function. Ubiquitination may also regulate protein stability. Ubiquitinated by RNF8 via 'Lys-48'-linked ubiquitination. In terms of tissue distribution, ubiquitously expressed with higher levels in the thymus, spleen and colon (at protein level).

It localises to the nucleus. Its subcellular location is the PML body. The protein localises to the nucleoplasm. The enzyme catalyses L-seryl-[protein] + ATP = O-phospho-L-seryl-[protein] + ADP + H(+). It catalyses the reaction L-threonyl-[protein] + ATP = O-phospho-L-threonyl-[protein] + ADP + H(+). With respect to regulation, activated through phosphorylation at Thr-68 by ATM in response to DNA double-strand breaks. Activation is modulated by several mediators including MDC1 and TP53BP1. Induces homodimerization with exchange of the T-loop/activation segment between protomers and transphosphorylation of the protomers. The autophosphorylated kinase dimer is fully active. Negatively regulated by PPM1D through dephosphorylation of Thr-68. Serine/threonine-protein kinase which is required for checkpoint-mediated cell cycle arrest, activation of DNA repair and apoptosis in response to the presence of DNA double-strand breaks. May also negatively regulate cell cycle progression during unperturbed cell cycles. Following activation, phosphorylates numerous effectors preferentially at the consensus sequence [L-X-R-X-X-S/T]. Regulates cell cycle checkpoint arrest through phosphorylation of CDC25A, CDC25B and CDC25C, inhibiting their activity. Inhibition of CDC25 phosphatase activity leads to increased inhibitory tyrosine phosphorylation of CDK-cyclin complexes and blocks cell cycle progression. May also phosphorylate NEK6 which is involved in G2/M cell cycle arrest. Regulates DNA repair through phosphorylation of BRCA2, enhancing the association of RAD51 with chromatin which promotes DNA repair by homologous recombination. Also stimulates the transcription of genes involved in DNA repair (including BRCA2) through the phosphorylation and activation of the transcription factor FOXM1. Regulates apoptosis through the phosphorylation of p53/TP53, MDM4 and PML. Phosphorylation of p53/TP53 at 'Ser-20' by CHEK2 may alleviate inhibition by MDM2, leading to accumulation of active p53/TP53. Phosphorylation of MDM4 may also reduce degradation of p53/TP53. Also controls the transcription of pro-apoptotic genes through phosphorylation of the transcription factor E2F1. Tumor suppressor, it may also have a DNA damage-independent function in mitotic spindle assembly by phosphorylating BRCA1. Its absence may be a cause of the chromosomal instability observed in some cancer cells. Promotes the CCAR2-SIRT1 association and is required for CCAR2-mediated SIRT1 inhibition. Under oxidative stress, promotes ATG7 ubiquitination by phosphorylating the E3 ubiquitin ligase TRIM32 at 'Ser-56' leading to positive regulation of the autophagosme assembly. The protein is Serine/threonine-protein kinase Chk2 of Mus musculus (Mouse).